The primary structure comprises 176 residues: Nucleoside triphosphate/diphosphate phosphatase (176 aa).

Residue arginine 23 is the Proton donor of the active site. 6 residues coordinate Mg(2+): asparagine 87, aspartate 103, aspartate 105, aspartate 107, aspartate 120, and glutamate 123.

The protein belongs to the Ntdp family. The cofactor is Mg(2+).

It carries out the reaction a ribonucleoside 5'-triphosphate + H2O = a ribonucleoside 5'-diphosphate + phosphate + H(+). It catalyses the reaction a ribonucleoside 5'-diphosphate + H2O = a ribonucleoside 5'-phosphate + phosphate + H(+). In terms of biological role, has nucleoside phosphatase activity towards nucleoside triphosphates and nucleoside diphosphates. This is Nucleoside triphosphate/diphosphate phosphatase from Bacillus pumilus (strain SAFR-032).